The primary structure comprises 180 residues: CASP-like protein 2D1 (180 aa).

The Cytoplasmic segment spans residues 1 to 7 (MAASGLK). A helical membrane pass occupies residues 8–28 (VPEMALRVCVVPLALASLWEM). The Extracellular segment spans residues 29-48 (ATNAQADDTYGEVKFSDLSG). The chain crosses the membrane as a helical span at residues 49 to 69 (FSYLVGVNAVTAAYALVSILL). At 70–79 (SSLKPLARYD) the chain is on the cytoplasmic side. A helical membrane pass occupies residues 80 to 100 (WVILVMDQASAYLLVTSASAA). The Extracellular segment spans residues 101–129 (AELLQLARRGDREVSWGEVCSYFGRFCGK). A helical transmembrane segment spans residues 130 to 150 (ATVSLALHAAALACFVALALV). The Cytoplasmic segment spans residues 151-180 (SAFRVLSTTGSSCHPPKHAQAQEHEQGRYN). The tract at residues 161 to 180 (SSCHPPKHAQAQEHEQGRYN) is disordered. Residues 170–180 (QAQEHEQGRYN) show a composition bias toward basic and acidic residues.

It belongs to the Casparian strip membrane proteins (CASP) family. As to quaternary structure, homodimer and heterodimers.

The protein localises to the cell membrane. This Sorghum bicolor (Sorghum) protein is CASP-like protein 2D1.